A 219-amino-acid chain; its full sequence is Alpha N-terminal protein methyltransferase 1 (219 aa).

S-adenosyl-L-methionine-binding positions include glycine 64, arginine 69, 111–112, and glutamine 127; that span reads LQ.

The protein belongs to the methyltransferase superfamily. NTM1 family.

The protein localises to the cytoplasm. The catalysed reaction is N-terminal L-alanyl-L-prolyl-L-lysyl-[protein] + 3 S-adenosyl-L-methionine = N-terminal N,N,N-trimethyl-L-alanyl-L-prolyl-L-lysyl-[protein] + 3 S-adenosyl-L-homocysteine + 3 H(+). It carries out the reaction N-terminal L-seryl-L-prolyl-L-lysyl-[protein] + 3 S-adenosyl-L-methionine = N-terminal N,N,N-trimethyl-L-seryl-L-prolyl-L-lysyl-[protein] + 3 S-adenosyl-L-homocysteine + 3 H(+). It catalyses the reaction N-terminal L-prolyl-L-prolyl-L-lysyl-[protein] + 2 S-adenosyl-L-methionine = N-terminal N,N-dimethyl-L-prolyl-L-prolyl-L-lysyl-[protein] + 2 S-adenosyl-L-homocysteine + 2 H(+). In terms of biological role, alpha-N-methyltransferase that methylates the N-terminus of target proteins containing the N-terminal motif [Ala/Pro/Ser]-Pro-Lys when the initiator Met is cleaved. Specifically catalyzes mono-, di- or tri-methylation of exposed alpha-amino group of Ala or Ser residue in the [Ala/Ser]-Pro-Lys motif and mono- or di-methylation of Pro in the Pro-Pro-Lys motif. The chain is Alpha N-terminal protein methyltransferase 1 (tae1) from Schizosaccharomyces pombe (strain 972 / ATCC 24843) (Fission yeast).